A 154-amino-acid chain; its full sequence is C-type lectin 16 (154 aa).

The N-terminal stretch at 1–20 (MALSLYLIAVICSLVGFTAS) is a signal peptide. The C-type lectin domain maps to 27–152 (DNRFCFPNVV…CASMRRFVCE (126 aa)). Intrachain disulfides connect Cys46-Cys151 and Cys123-Cys143.

As to quaternary structure, (Microbial infection) Interacts with non-structural protein 1 of dengue virus type 2. Interacts with envelope protein E of dengue virus type 2. As to expression, female salivary gland (at protein level). Not detected in female carcass without salivary glands (at protein level). Not detected in male tissues (at protein level).

The protein resides in the secreted. Putative lectin. May have a regulatory role in mosquito immunity. Probably suppresses replication of dengue virus type 2 in mosquito salivary glands. This is C-type lectin 16 from Aedes aegypti (Yellowfever mosquito).